Consider the following 150-residue polypeptide: Large ribosomal subunit protein bL9 (150 aa).

Belongs to the bacterial ribosomal protein bL9 family.

In terms of biological role, binds to the 23S rRNA. The protein is Large ribosomal subunit protein bL9 of Vesicomyosocius okutanii subsp. Calyptogena okutanii (strain HA).